The primary structure comprises 835 residues: Leucine--tRNA ligase (835 aa).

The short motif at 42–52 is the 'HIGH' region element; the sequence is PYPSGRIHMGH. Positions 612–616 match the 'KMSKS' region motif; sequence KMSKS. Lysine 615 contacts ATP.

It belongs to the class-I aminoacyl-tRNA synthetase family.

Its subcellular location is the cytoplasm. The catalysed reaction is tRNA(Leu) + L-leucine + ATP = L-leucyl-tRNA(Leu) + AMP + diphosphate. This Rhizorhabdus wittichii (strain DSM 6014 / CCUG 31198 / JCM 15750 / NBRC 105917 / EY 4224 / RW1) (Sphingomonas wittichii) protein is Leucine--tRNA ligase.